The chain runs to 561 residues: uncharacterized protein (561 aa).

The next 2 membrane-spanning stretches (helical) occupy residues 29-49 and 80-100; these read FIFN…KKII and FLFH…AVVI.

It localises to the cell membrane. This is an uncharacterized protein from Mycoplasma pneumoniae (strain ATCC 29342 / M129 / Subtype 1) (Mycoplasmoides pneumoniae).